The chain runs to 109 residues: Thioredoxin (109 aa).

Positions 2–109 constitute a Thioredoxin domain; the sequence is ETLLWKDARE…LVEKIKELFK (108 aa). A disulfide bridge links Cys-27 with Cys-30.

This sequence belongs to the thioredoxin family.

Its function is as follows. Participates in various redox reactions through the reversible oxidation of its active center dithiol to a disulfide and catalyzes dithiol-disulfide exchange reactions. The sequence is that of Thioredoxin (trxA) from Mycoplasmopsis pulmonis (strain UAB CTIP) (Mycoplasma pulmonis).